Reading from the N-terminus, the 438-residue chain is Ribosomal protein uS12 methylthiotransferase RimO (438 aa).

Residues 4–114 enclose the MTTase N-terminal domain; the sequence is PRVSFVSLGC…VMNAVHEVAP (111 aa). The [4Fe-4S] cluster site is built by cysteine 13, cysteine 49, cysteine 78, cysteine 146, cysteine 150, and cysteine 153. Positions 132–370 constitute a Radical SAM core domain; that stretch reads LTPRHYAYLK…MAKQQQISTN (239 aa). The 66-residue stretch at 373–438 folds into the TRAM domain; it reads KKKVGKRLPV…DAYDLHGTAV (66 aa).

This sequence belongs to the methylthiotransferase family. RimO subfamily. [4Fe-4S] cluster is required as a cofactor.

Its subcellular location is the cytoplasm. It carries out the reaction L-aspartate(89)-[ribosomal protein uS12]-hydrogen + (sulfur carrier)-SH + AH2 + 2 S-adenosyl-L-methionine = 3-methylsulfanyl-L-aspartate(89)-[ribosomal protein uS12]-hydrogen + (sulfur carrier)-H + 5'-deoxyadenosine + L-methionine + A + S-adenosyl-L-homocysteine + 2 H(+). Catalyzes the methylthiolation of an aspartic acid residue of ribosomal protein uS12. This Brucella ovis (strain ATCC 25840 / 63/290 / NCTC 10512) protein is Ribosomal protein uS12 methylthiotransferase RimO.